The primary structure comprises 527 residues: MEKLLVISLLLLISTSVTTSQSVTDPIAFLRCLDRQPTDPTSPNSAVAYIPTNSSFTTVLRSRIPNLRFDKPTTPKPISVVAAATWTHIQAAVGCARELSLQVRIRSGGHDFEGLSYTSTVPFFVLDMFGFKTVDVNLTERTAWVDSGATLGELYYRISEKSNVLGFPAGLSTTLGVGGHFSGGGYGNLMRKYGLSVDNVFGSGIVDSNGNIFTDRVSMGEDRFWAIRGGGAASYGVVLGYKIQLVPVPEKVTVFKVGKTVGEGAVDLIMKWQSFAHSTDRNLFVRLTLTLVNGTKPGENTVLATFIGMYLGRSDKLLTVMNRDFPELKLKKTDCTEMRWIDSVLFWDDYPVGTPTSVLLNPLVAKKLFMKRKSDYVKRLISRTDLGLILKKLVEVEKVKMNWNPYGGRMGEIPSSRTPFPHRAGNLFNIEYIIDWSEAGDNVEKKYLALANEFYRFMTPYVSSNPREAFLNYRDLDIGSSVKSTYQEGKIYGAKYFKENFERLVDIKTTIDAENFWKNEQSIPVRR.

Positions 1–20 (MEKLLVISLLLLISTSVTTS) are cleaved as a signal peptide. C32 and C95 are disulfide-bonded. The N-linked (GlcNAc...) asparagine glycan is linked to N53. Positions 73 to 248 (TTPKPISVVA…LGYKIQLVPV (176 aa)) constitute an FAD-binding PCMH-type domain. H110 carries the post-translational modification Pros-8alpha-FAD histidine. N137 and N293 each carry an N-linked (GlcNAc...) asparagine glycan.

It belongs to the oxygen-dependent FAD-linked oxidoreductase family. FAD is required as a cofactor.

It localises to the secreted. Its subcellular location is the cell wall. The polypeptide is Berberine bridge enzyme-like 10 (Arabidopsis thaliana (Mouse-ear cress)).